The following is a 393-amino-acid chain: NAD(P)H-quinone oxidoreductase subunit H, chloroplastic (393 aa).

Belongs to the complex I 49 kDa subunit family. NDH is composed of at least 16 different subunits, 5 of which are encoded in the nucleus.

The protein resides in the plastid. It is found in the chloroplast thylakoid membrane. The enzyme catalyses a plastoquinone + NADH + (n+1) H(+)(in) = a plastoquinol + NAD(+) + n H(+)(out). It carries out the reaction a plastoquinone + NADPH + (n+1) H(+)(in) = a plastoquinol + NADP(+) + n H(+)(out). NDH shuttles electrons from NAD(P)H:plastoquinone, via FMN and iron-sulfur (Fe-S) centers, to quinones in the photosynthetic chain and possibly in a chloroplast respiratory chain. The immediate electron acceptor for the enzyme in this species is believed to be plastoquinone. Couples the redox reaction to proton translocation, and thus conserves the redox energy in a proton gradient. This Fagopyrum esculentum subsp. ancestrale (Wild buckwheat) protein is NAD(P)H-quinone oxidoreductase subunit H, chloroplastic.